The chain runs to 497 residues: Protein nucleotidyltransferase YdiU (497 aa).

8 residues coordinate ATP: glycine 92, glycine 94, arginine 95, lysine 114, aspartate 126, glycine 127, arginine 177, and arginine 184. Aspartate 261 (proton acceptor) is an active-site residue. Mg(2+)-binding residues include asparagine 262 and aspartate 271. Residue aspartate 271 participates in ATP binding.

This sequence belongs to the SELO family. Mg(2+) is required as a cofactor. Requires Mn(2+) as cofactor.

The enzyme catalyses L-seryl-[protein] + ATP = 3-O-(5'-adenylyl)-L-seryl-[protein] + diphosphate. It catalyses the reaction L-threonyl-[protein] + ATP = 3-O-(5'-adenylyl)-L-threonyl-[protein] + diphosphate. The catalysed reaction is L-tyrosyl-[protein] + ATP = O-(5'-adenylyl)-L-tyrosyl-[protein] + diphosphate. It carries out the reaction L-histidyl-[protein] + UTP = N(tele)-(5'-uridylyl)-L-histidyl-[protein] + diphosphate. The enzyme catalyses L-seryl-[protein] + UTP = O-(5'-uridylyl)-L-seryl-[protein] + diphosphate. It catalyses the reaction L-tyrosyl-[protein] + UTP = O-(5'-uridylyl)-L-tyrosyl-[protein] + diphosphate. Functionally, nucleotidyltransferase involved in the post-translational modification of proteins. It can catalyze the addition of adenosine monophosphate (AMP) or uridine monophosphate (UMP) to a protein, resulting in modifications known as AMPylation and UMPylation. In Bordetella petrii (strain ATCC BAA-461 / DSM 12804 / CCUG 43448), this protein is Protein nucleotidyltransferase YdiU.